We begin with the raw amino-acid sequence, 103 residues long: Large ribosomal subunit protein eL30 (103 aa).

Belongs to the eukaryotic ribosomal protein eL30 family.

The chain is Large ribosomal subunit protein eL30 from Methanothrix thermoacetophila (strain DSM 6194 / JCM 14653 / NBRC 101360 / PT) (Methanosaeta thermophila).